A 154-amino-acid chain; its full sequence is Spermatogenesis-associated protein 19, mitochondrial (154 aa).

A mitochondrion-targeting transit peptide spans 1–24 (MIITTWIMYIFARKTVGLPFPPRV). 2 positions are modified to phosphoserine: serine 26 and serine 116.

As to expression, expressed specifically in adult testis (at protein level).

The protein resides in the mitochondrion outer membrane. The protein localises to the mitochondrion. It is found in the cell projection. It localises to the cilium. Its subcellular location is the flagellum. In terms of biological role, essential for sperm motility and male fertility. Plays an important role in sperm motility by regulating the organization and function of the mitochondria and is also required for correct sperm midpiece assembly. The polypeptide is Spermatogenesis-associated protein 19, mitochondrial (Spata19) (Mus musculus (Mouse)).